The following is a 179-amino-acid chain: Ribosome-recycling factor (179 aa).

Belongs to the RRF family.

The protein resides in the cytoplasm. Functionally, responsible for the release of ribosomes from messenger RNA at the termination of protein biosynthesis. May increase the efficiency of translation by recycling ribosomes from one round of translation to another. In Chlamydia trachomatis serovar L2b (strain UCH-1/proctitis), this protein is Ribosome-recycling factor.